We begin with the raw amino-acid sequence, 92 residues long: Small ribosomal subunit protein uS19 (92 aa).

This sequence belongs to the universal ribosomal protein uS19 family.

In terms of biological role, protein S19 forms a complex with S13 that binds strongly to the 16S ribosomal RNA. This chain is Small ribosomal subunit protein uS19, found in Prochlorococcus marinus (strain MIT 9215).